The following is a 339-amino-acid chain: DNA-directed RNA polymerase subunit alpha (339 aa).

Positions 1–235 (MVIQKNWQEL…DQLQVFVNFE (235 aa)) are alpha N-terminal domain (alpha-NTD). Residues 251-339 (FNPALLKKVD…DLAKRFEEHY (89 aa)) are alpha C-terminal domain (alpha-CTD).

Belongs to the RNA polymerase alpha chain family. Homodimer. The RNAP catalytic core consists of 2 alpha, 1 beta, 1 beta' and 1 omega subunit. When a sigma factor is associated with the core the holoenzyme is formed, which can initiate transcription.

The enzyme catalyses RNA(n) + a ribonucleoside 5'-triphosphate = RNA(n+1) + diphosphate. Its function is as follows. DNA-dependent RNA polymerase catalyzes the transcription of DNA into RNA using the four ribonucleoside triphosphates as substrates. In Methylobacterium radiotolerans (strain ATCC 27329 / DSM 1819 / JCM 2831 / NBRC 15690 / NCIMB 10815 / 0-1), this protein is DNA-directed RNA polymerase subunit alpha.